A 56-amino-acid chain; its full sequence is Large ribosomal subunit protein bL32c (56 aa).

It belongs to the bacterial ribosomal protein bL32 family.

It localises to the plastid. The protein resides in the chloroplast. The polypeptide is Large ribosomal subunit protein bL32c (Huperzia lucidula (Shining clubmoss)).